Reading from the N-terminus, the 495-residue chain is Probable cytosol aminopeptidase (495 aa).

The Mn(2+) site is built by K258 and D263. K270 is a catalytic residue. Positions 281, 340, and 342 each coordinate Mn(2+). R344 is an active-site residue.

The protein belongs to the peptidase M17 family. The cofactor is Mn(2+).

The protein localises to the cytoplasm. It carries out the reaction Release of an N-terminal amino acid, Xaa-|-Yaa-, in which Xaa is preferably Leu, but may be other amino acids including Pro although not Arg or Lys, and Yaa may be Pro. Amino acid amides and methyl esters are also readily hydrolyzed, but rates on arylamides are exceedingly low.. The enzyme catalyses Release of an N-terminal amino acid, preferentially leucine, but not glutamic or aspartic acids.. Functionally, presumably involved in the processing and regular turnover of intracellular proteins. Catalyzes the removal of unsubstituted N-terminal amino acids from various peptides. In Leptospira interrogans serogroup Icterohaemorrhagiae serovar copenhageni (strain Fiocruz L1-130), this protein is Probable cytosol aminopeptidase.